Consider the following 828-residue polypeptide: Protein kintoun (828 aa).

Disordered regions lie at residues 1–31, 223–250, 383–424, 556–668, and 741–828; these read MSGS…DEPI, KNPT…EGEP, DSGV…PTSN, APVQ…HRGI, and KKNQ…EDLI. Residues 9 to 22 are compositionally biased toward basic residues; sequence RNKHSKGNLKHNNN. A Phosphoserine modification is found at Ser384. The segment covering 395–414 has biased composition (acidic residues); sequence PVEEEEDGEDEIEAEEEEEE. Positions 556 to 573 are enriched in basic and acidic residues; that stretch reads APVQEDKPGDIQFKRNDQ. The segment covering 591 to 601 has biased composition (acidic residues); it reads EREEGEIEEAE. Basic residues predominate over residues 606–620; the sequence is KKSASKKQRGKRNKK. Polar residues predominate over residues 625–641; it reads SESACVSLPTSVDSQPM. Positions 741 to 755 are enriched in basic residues; that stretch reads KKNQKRRDCKLRAQQ. At Ser759 the chain carries Phosphoserine. The span at 788-808 shows a compositional bias: basic and acidic residues; the sequence is DSGLDLTRHNKKRELAEEADN. Residues 815–828 are compositionally biased toward acidic residues; it reads EMDDDDDDEDEDLI.

It belongs to the PIH1 family. Kintoun subfamily. In terms of assembly, interacts with Pp1alpha-96A, Pp1-87B, Pp1-13C and flw.

Its subcellular location is the cytoplasm. Required for cytoplasmic pre-assembly of axonemal dyneins, thereby playing a central role in motility in cilia and flagella. Involved in pre-assembly of dynein arm complexes in the cytoplasm before intraflagellar transport loads them for the ciliary compartment. The polypeptide is Protein kintoun (Drosophila willistoni (Fruit fly)).